The following is a 745-amino-acid chain: Junction plakoglobin (745 aa).

M1 carries the N-acetylmethionine modification. T14 is a glycosylation site (O-linked (GlcNAc) threonine). Phosphoserine is present on residues S99 and S125. 12 ARM repeats span residues 132 to 171, 172 to 215, 216 to 255, 258 to 297, 298 to 341, 342 to 381, 383 to 420, 423 to 464, 470 to 510, 512 to 551, 574 to 613, and 615 to 661; these read NYQD…QLSK, KEAS…LSHH, REGL…NLLL, EGAK…LLAY, GNQE…LSVC, PSNK…NLSD, ATKQ…NLTC, SKNK…HLTS, EMAQ…NLAL, PANH…QPYT, PMNR…ELAQ, and KEAA…PDYR. The interaction with DSC1 and DSG1 stretch occupies residues 132-297; the sequence is NYQDDAELAT…TTDCLQLLAY (166 aa). Position 182 is a phosphoserine (S182). The interval 574 to 661 is interaction with DSC1; it reads PMNRMEIFRL…ISEDKNPDYR (88 aa). Phosphoserine is present on residues S665 and S730.

It belongs to the beta-catenin family. In terms of assembly, homodimer. Component of an E-cadherin/catenin adhesion complex composed of at least E-cadherin/CDH1 and gamma-catenin/JUP, and possibly alpha-catenin/CTNNA1; the complex is located to adherens junctions. The stable association of CTNNA1 is controversial as CTNNA1 was shown not to bind to F-actin when assembled in the complex. Interacts with MUC1. Interacts with CAV1. Interacts with PTPRJ. Interacts with DSG1. Interacts with DSC1 and DSC2. Interacts with PKP2. Interacts with PKP3 (via N-terminus); the interaction is required for PKP3 localization to desmosome cell-cell junctions. Interacts with DSG4. Post-translationally, may be phosphorylated by FER.

Its subcellular location is the cell junction. The protein resides in the adherens junction. It is found in the desmosome. The protein localises to the cytoplasm. It localises to the cytoskeleton. Its subcellular location is the cell membrane. The protein resides in the nucleus. Its function is as follows. Common junctional plaque protein. The membrane-associated plaques are architectural elements in an important strategic position to influence the arrangement and function of both the cytoskeleton and the cells within the tissue. The presence of plakoglobin in both the desmosomes and in the intermediate junctions suggests that it plays a central role in the structure and function of submembranous plaques. Acts as a substrate for VE-PTP and is required by it to stimulate VE-cadherin function in endothelial cells. Can replace beta-catenin in E-cadherin/catenin adhesion complexes which are proposed to couple cadherins to the actin cytoskeleton. The protein is Junction plakoglobin of Bos taurus (Bovine).